Here is a 260-residue protein sequence, read N- to C-terminus: Isopentenyl phosphate kinase (260 aa).

6 to 10 (KLGGS) is a binding site for ATP. Substrate is bound at residue glycine 55. Position 56 (glycine 56) interacts with ATP. The substrate site is built by histidine 60 and glycine 159. ATP contacts are provided by aspartate 180, glycine 217, and lysine 221.

This sequence belongs to the isopentenyl phosphate kinase family. As to quaternary structure, homodimer.

It carries out the reaction isopentenyl phosphate + ATP = isopentenyl diphosphate + ADP. In terms of biological role, catalyzes the formation of isopentenyl diphosphate (IPP), the building block of all isoprenoids. Has no activity with farnesyl phosphate. This chain is Isopentenyl phosphate kinase, found in Methanocaldococcus jannaschii (strain ATCC 43067 / DSM 2661 / JAL-1 / JCM 10045 / NBRC 100440) (Methanococcus jannaschii).